The chain runs to 181 residues: ATP-dependent protease subunit HslV (181 aa).

Threonine 7 is an active-site residue. Positions 165, 168, and 171 each coordinate Na(+).

This sequence belongs to the peptidase T1B family. HslV subfamily. A double ring-shaped homohexamer of HslV is capped on each side by a ring-shaped HslU homohexamer. The assembly of the HslU/HslV complex is dependent on binding of ATP.

The protein localises to the cytoplasm. The catalysed reaction is ATP-dependent cleavage of peptide bonds with broad specificity.. With respect to regulation, allosterically activated by HslU binding. In terms of biological role, protease subunit of a proteasome-like degradation complex believed to be a general protein degrading machinery. In Lysinibacillus sphaericus (strain C3-41), this protein is ATP-dependent protease subunit HslV.